The chain runs to 979 residues: Ubiquitin carboxyl-terminal hydrolase 37 (979 aa).

The KEN box 1 motif lies at 32 to 34 (KDN). 2 short sequence motifs (D-box) span residues 71-79 (RLMLTLQDN) and 96-105 (RLFLDAVHQN). Residue Ser114 is modified to Phosphoserine. 2 disordered regions span residues 116–178 (GSGS…TGGG) and 192–240 (STPL…SRKY). Polar residues predominate over residues 135–148 (RQLSYSDNQASSKR). The span at 149 to 159 (GSLETKDEIPF) shows a compositional bias: basic and acidic residues. Residues 160–168 (RKVLGSPGR) carry the D-box 3 motif. Position 212 is a phosphoserine (Ser212). Positions 222-224 (KEN) match the KEN box 2 motif. Residues 341–951 (QGFSNLGNTC…SGYIFFYMHK (611 aa)) enclose the USP domain. Cys350 (nucleophile) is an active-site residue. At Ser628 the chain carries Phosphoserine; by CDK2. Phosphoserine is present on residues Ser650 and Ser652. One can recognise a UIM 1 domain in the interval 704 to 723 (SEEEVLAAVLEISRREASPV). A disordered region spans residues 719-795 (EASPVLSPED…TPEGSQGEVD (77 aa)). Ser770 carries the post-translational modification Phosphoserine. The segment covering 774–786 (ITKDCDENKENKT) has biased composition (basic and acidic residues). A KEN box 3 motif is present at residues 782-784 (KEN). UIM domains follow at residues 806–825 (REEQ…QEAW) and 828–847 (KEDD…FNNS). The active-site Proton acceptor is the His906.

The protein belongs to the peptidase C19 family. In terms of assembly, interacts with FZR1/CDH1. Interacts with CDT1. Polyubiquitinated via 'Lys-11'-linked ubiquitin by the APC(CDH1) complex during late mitosis, leading to its degradation. Able to mediate auto-deubiquitination. In terms of processing, phosphorylated at Ser-628 by CDK2 during G1/S phase but not during mitosis; phosphorylation at Ser-628 is required for deubiquitinase activity. Also polyubiquitinated during early G1 phase, without leading to degradation. Phosphorylated at Ser-114 by ATM following DNA damage, which in turn increases its deubiquitination activity towards BLM.

It localises to the nucleus. The protein resides in the chromosome. The enzyme catalyses Thiol-dependent hydrolysis of ester, thioester, amide, peptide and isopeptide bonds formed by the C-terminal Gly of ubiquitin (a 76-residue protein attached to proteins as an intracellular targeting signal).. Its function is as follows. Deubiquitinase that plays a role in different processes including cell cycle regulation, DNA replication or DNA damage response. Antagonizes the anaphase-promoting complex (APC/C) during G1/S transition by mediating deubiquitination of cyclin-A (CCNA1 and CCNA2), thereby promoting S phase entry. Specifically mediates deubiquitination of 'Lys-11'-linked polyubiquitin chains, a specific ubiquitin-linkage type mediated by the APC/C complex. Phosphorylation at Ser-628 during G1/S phase maximizes the deubiquitinase activity, leading to prevent degradation of cyclin-A (CCNA1 and CCNA2). Plays an important role in the regulation of DNA replication by stabilizing the licensing factor CDT1. Also plays an essential role beyond S-phase entry to promote the efficiency and fidelity of replication by deubiquitinating checkpoint kinase 1/CHK1, promoting its stability. Sustains the DNA damage response (DDR) by deubiquitinating and stabilizing the ATP-dependent DNA helicase BLM. Mechanistically, DNA double-strand breaks (DSB) promotes ATM-mediated phosphorylation of USP37 and enhances the binding between USP37 and BLM. Promotes cell migration by deubiquitinating and stabilizing the epithelial-mesenchymal transition (EMT)-inducing transcription factor SNAI. Plays a role in the regulation of mitotic spindle assembly and mitotic progression by associating with chromatin-associated WAPL and stabilizing it through deubiquitination. This Mus musculus (Mouse) protein is Ubiquitin carboxyl-terminal hydrolase 37.